We begin with the raw amino-acid sequence, 2435 residues long: Highly reducing polyketide synthase ATR6 (2435 aa).

The 433-residue stretch at 18-450 (AEPIAIVSAA…GSNAHVVLDN (433 aa)) folds into the Ketosynthase family 3 (KS3) domain. Active-site for beta-ketoacyl synthase activity residues include C192, H331, and H371. The tract at residues 586–883 (FVFTGQGAQW…EIGPSAALGG (298 aa)) is malonyl-CoA:ACP transacylase (MAT) domain. The active-site For malonyltransferase activity is the S682. Residues 979 to 1125 (HDLLGGKVLG…GLVRLALNAS (147 aa)) are N-terminal hotdog fold. A dehydratase (DH) domain region spans residues 979–1291 (HDLLGGKVLG…LRGISMTSVG (313 aa)). The PKS/mFAS DH domain occupies 979-1296 (HDLLGGKVLG…MTSVGLQGNV (318 aa)). The active-site For beta-hydroxyacyl dehydratase activity is the H1011. The segment at 1141 to 1296 (QYPTPARFWY…MTSVGLQGNV (156 aa)) is C-terminal hotdog fold. The interval 1724–2037 (GILDTLHFAE…DHNRLRNVVI (314 aa)) is enoylreductase (ER) domain. Positions 2062–2301 (PEQTYLLVGK…ITGIAVPQPG (240 aa)) are catalytic ketoreductase (KRc) domain. The 77-residue stretch at 2353 to 2429 (VLLSSAVGVL…VLCQKIISRM (77 aa)) folds into the Carrier domain. An O-(pantetheine 4'-phosphoryl)serine modification is found at S2389.

It functions in the pathway mycotoxin biosynthesis. Its function is as follows. Highly reducing polyketide synthase; part of the core atranone cluster (CAC) which products are predicted to catalyze most or all steps of mycotoxin atranone synthesis, starting from geranylgeranyl pyrophosphate (GGPP). The initial cyclization of GGPP to dolabellane is probably performed by the terpene cyclase ATR13. The Baeyer-Villiger oxidation near the end of the atranone synthesis, which converts atranones D and E to atranones F and G is predicted to be catalyzed by the monooxygenase ATR8. Of the CAC's other predicted gene products, the reducing PKS ATR6 might synthesize a polyketide chain. This polyketide is probably transferred onto the atranone backbone by the polyketide transferase ATR5. Other predicted CAC products include 4 oxygenases (ATR2, ATR3, ATR4, and ATR14), 3 short-chain reductases (ATR7, ATR9, and ATR10), and a methyltransferase (ATR12). These may all be involved in the various steps of atranone biosynthesis, although their specific roles must await experimental determination. This Stachybotrys chlorohalonatus (strain IBT 40285) protein is Highly reducing polyketide synthase ATR6.